We begin with the raw amino-acid sequence, 422 residues long: Glutamate-1-semialdehyde 2,1-aminomutase (422 aa).

An N6-(pyridoxal phosphate)lysine modification is found at K258.

It belongs to the class-III pyridoxal-phosphate-dependent aminotransferase family. HemL subfamily. Homodimer. Pyridoxal 5'-phosphate serves as cofactor.

It localises to the cytoplasm. The catalysed reaction is (S)-4-amino-5-oxopentanoate = 5-aminolevulinate. The protein operates within porphyrin-containing compound metabolism; protoporphyrin-IX biosynthesis; 5-aminolevulinate from L-glutamyl-tRNA(Glu): step 2/2. The polypeptide is Glutamate-1-semialdehyde 2,1-aminomutase (Chlamydia trachomatis serovar L2 (strain ATCC VR-902B / DSM 19102 / 434/Bu)).